We begin with the raw amino-acid sequence, 481 residues long: Pyruvate kinase (481 aa).

Arginine 36 serves as a coordination point for substrate. K(+) is bound by residues asparagine 38, serine 40, and aspartate 70. Position 38–41 (asparagine 38–histidine 41) interacts with ATP. Positions 77 and 160 each coordinate ATP. Glutamate 225 lines the Mg(2+) pocket. Residues glycine 251, aspartate 252, and threonine 284 each coordinate substrate. Aspartate 252 is a Mg(2+) binding site.

Belongs to the pyruvate kinase family. In terms of assembly, homotetramer. Mg(2+) serves as cofactor. The cofactor is K(+).

The catalysed reaction is pyruvate + ATP = phosphoenolpyruvate + ADP + H(+). Its pathway is carbohydrate degradation; glycolysis; pyruvate from D-glyceraldehyde 3-phosphate: step 5/5. Its activity is regulated as follows. Allosterically activated by AMP and by several sugar phosphates. Belongs to type II PK. The sequence is that of Pyruvate kinase (pykA) from Buchnera aphidicola subsp. Schizaphis graminum (strain Sg).